Reading from the N-terminus, the 145-residue chain is Large ribosomal subunit protein uL16 (145 aa).

It belongs to the universal ribosomal protein uL16 family. Part of the 50S ribosomal subunit.

Binds 23S rRNA and is also seen to make contacts with the A and possibly P site tRNAs. In Exiguobacterium sibiricum (strain DSM 17290 / CCUG 55495 / CIP 109462 / JCM 13490 / 255-15), this protein is Large ribosomal subunit protein uL16.